We begin with the raw amino-acid sequence, 1710 residues long: MKCTSVNIRNVLDISLKKKIKENTNLSDDEIIIIYKRFNYISSNGKLNYDNFEKSLGILGSIQNAYLYKSIFKAFDLNNDNYLDFYEFCVAINIMLKGNKKDKLKLSYRIVNAGFNSNEDACVHKSSCMVNKFNTKEDNNMNGDNINGDNNNNHNNINGDNNNNHNNINGDNNNNNHNNINGDNNNNHNNINGDNNNNNHNNINGDNNNNHNNINGDNNNNHNNSHNNNSHNNNNKAENSLGQPLNEKNINDPINKHRNSQSIIYNINDEYNEKIKKNKKQDYSNYITYENFEKIVLSINDIKRQLLGTGDEIITSQIKYTFRSLSILCDDGIYRMNFECYKKALKCNEFLKLLGIHTKVADVFLQHELLKRKDKNKTKNGTMRNRKKYKNDSNRIANHLIIKSFSESTNTRGSIINDSTSFLFLRKQKKKKKKKKKKKKKKEKKAILYERKSTFSSSMENKSQNKSQNKSHNKNIKSVSRILSRVNKLSSTELIPNECDHKPNEEVKSTSDVLTPIFFNNGDEKMNHDTDGNMVYHKNNVDDNLVDGDVVSQGKRCSFFSSCENKKNEENKSITFNDINSGNINTNSCIMNNMIVTKESNEEIINEEAQSSYIYNKNIFCSKYNTKKDKNEPLKCDLFECSFINNDKNIVRDEDSNHKNVRKTDDYFIIDDNNIFDNGPIIISKNKTNDRERKLLKTFSSSSLKKKSLLKNYNYHIKKKNKDPNVEDTNMLYHDDIKKEYDHKVTKNNKNTCNNNYYNNVSFNSSAYYEYHSDIDLIHFSNNLKKKKKKNVTSPRPSSKEYERKVTYHKECCSNERMKNIKVNESDLGMFCVNNDKTNIEDVKEKKACDVLNRGCIKEQVQCKISEFENDKGNEIYMQEFKKCIEKYKEYVNQGEGHLKDEEEEKNDDEEEGEDGEDDEEENDDDDDDEDGDDDEDGDDDNDDNDDNDDNDDNDDNDDNDDNDDNDDNDDNDEKSNIKIENKKDVPNIHNNNDDDGINCCTNLFKDDDTLSALEKNVTNNNLIKIMSAKYLYHKFLEYKDFMKNNTTLFSHFNKIYQHEDDKINTDNKDVLNYRPKHNNDINYYNIPCEDQIKSDEKKSLLNVEFGDDIIKKKFFISSVNSHYVMINNNLTKEQMLYLIRNILMSIEDYLKKEKNRDYNKIFFLFFSIFIYNTQNGGDQKEMHEDEKWDHTNINEDKNVEKNDDYKNLSNNENSVYYNTMLRESLWNKKKYIKLNIFKNIILVISIVRYFLHTITISQKYTSSYDSLDDSNMIKSMNSLKLNEINILLNRASEILEKYSLGSVENKKVYINKSNYYNSSKKGKLSVSLRQNKQKKTFHRILAVYFGHERWDLVMNMMIGIRISSIKKFSINDISNYFHHKDVIQLPTSNAQHKVIFKNYAPIIFKNIRNFYGIKSKEYLTSVGPEQVISNMVLGNLSTLSELLSEGKSGSLFYFTSNGKYIIKTVCRNIHNLSKKLLPKYYEHIKKNPDSLLTRLYGIHSIKYQNNLGRKKKKIYFIVMNNFFSSIVEIHRRYDIKGSLVGRTVPETKREDHTIALKDVDIDELGDIINIGPENKERLLKVLKADADFLKENMLLDYSLLFGIHYRELSKDVVNWEETKTNQINHIYDYKGNCIASRPFHQCDYGGIISVDKKKIFFFGIIDIFTKWSIKKKFEHTFRTIQKFDGKNISCIHPNAYAKRFVTFIENHMK.

Positions 68–98 constitute an EF-hand domain; that stretch reads YKSIFKAFDLNNDNYLDFYEFCVAINIMLKG. Residues Asp76, Asn78, Asp80, Tyr82, and Glu87 each contribute to the Ca(2+) site. 3 disordered regions span residues 139–255, 427–479, and 895–993; these read NNMN…DPIN, KQKK…IKSV, and GEGH…HNNN. Low complexity predominate over residues 140–235; sequence NMNGDNINGD…HNNNSHNNNN (96 aa). Residues 236-248 are compositionally biased toward polar residues; the sequence is KAENSLGQPLNEK. Over residues 427-444 the composition is skewed to basic residues; the sequence is KQKKKKKKKKKKKKKKEK. Low complexity predominate over residues 456 to 468; that stretch reads SSSMENKSQNKSQ. The segment covering 902–973 has biased composition (acidic residues); it reads EEEEKNDDEE…DDNDDNDDND (72 aa). The segment covering 974-987 has biased composition (basic and acidic residues); it reads EKSNIKIENKKDVP. The region spanning 1334 to 1709 is the PIPK domain; it reads QKKTFHRILA…RFVTFIENHM (376 aa).

The enzyme catalyses a 1,2-diacyl-sn-glycero-3-phospho-(1D-myo-inositol 4-phosphate) + ATP = a 1,2-diacyl-sn-glycero-3-phospho-(1D-myo-inositol-4,5-bisphosphate) + ADP + H(+). With respect to regulation, catalytic activity is increase by myristoylated ARF1. Phosphatidic acid has no effect on catalytic activity. Its function is as follows. Catalyzes the phosphorylation of phosphatidylinositol 4-phosphate (PtdIns(4)P/PI4P) to form phosphatidylinositol 4,5-bisphosphate (PtdIns(4,5)P2/PIP2), a lipid second messenger that regulates several cellular processes. This is Phosphatidylinositol 4-phosphate 5-kinase from Plasmodium falciparum (isolate 3D7).